The sequence spans 245 residues: Uridylate kinase (245 aa).

Residue 12–15 participates in ATP binding; sequence KLSG. The segment at 20-25 is involved in allosteric activation by GTP; it reads GEKGVG. Glycine 54 lines the UMP pocket. ATP is bound by residues glycine 55 and arginine 59. UMP contacts are provided by residues aspartate 74 and 135-142; that span reads IGSPYFST. Asparagine 163, tyrosine 169, and aspartate 172 together coordinate ATP.

The protein belongs to the UMP kinase family. As to quaternary structure, homohexamer.

Its subcellular location is the cytoplasm. It carries out the reaction UMP + ATP = UDP + ADP. The protein operates within pyrimidine metabolism; CTP biosynthesis via de novo pathway; UDP from UMP (UMPK route): step 1/1. Its activity is regulated as follows. Allosterically activated by GTP. Inhibited by UTP. Functionally, catalyzes the reversible phosphorylation of UMP to UDP. This chain is Uridylate kinase, found in Streptococcus thermophilus (strain ATCC BAA-491 / LMD-9).